The following is a 396-amino-acid chain: MAKAKFERNKPHCNIGTIGHVDHGKTSLTAAITKVLAETGGATFTAYDQIDKAPEERARGITISTAHVEYETGNRHYAHVDCPGHADYVKNMITGAAQMDGGILVVSAADGPMPQTREHILLARQVGVPALVVFLNKVDMVDDPELLDLVEMEVRELLSSYQFPGDDIPIIKGSALCALEDKNPEIGRDAILKLMEAVDAYIPQPERPLDRPFLMPIEDVFSISGRGTVVTGRIERGEVKVGDEVEIVGLKATSKTTVTGVEMFRKLLDRGEAGDNIGALLRGTKREDVERGQVLAKPGSITPHTKFAAEAYILTKEEGGRHTPFFTNYRPQFYFRTTDVTGVVSLPEGTEMVMPGDNVSMQVELIAPIAMDEGLRFAIREGGRTVGAGVVAKISQ.

In terms of domain architecture, tr-type G spans 10-206; the sequence is KPHCNIGTIG…AVDAYIPQPE (197 aa). The tract at residues 19–26 is G1; the sequence is GHVDHGKT. 19 to 26 is a GTP binding site; the sequence is GHVDHGKT. T26 is a binding site for Mg(2+). The segment at 60–64 is G2; it reads GITIS. Residues 81–84 are G3; the sequence is DCPG. GTP is bound by residues 81-85 and 136-139; these read DCPGH and NKVD. Residues 136-139 are G4; the sequence is NKVD. Residues 174–176 are G5; that stretch reads SAL.

Belongs to the TRAFAC class translation factor GTPase superfamily. Classic translation factor GTPase family. EF-Tu/EF-1A subfamily. Monomer.

It is found in the cytoplasm. It carries out the reaction GTP + H2O = GDP + phosphate + H(+). GTP hydrolase that promotes the GTP-dependent binding of aminoacyl-tRNA to the A-site of ribosomes during protein biosynthesis. The polypeptide is Elongation factor Tu (Granulibacter bethesdensis (strain ATCC BAA-1260 / CGDNIH1)).